Reading from the N-terminus, the 523-residue chain is PDHGFCQPISIPLCTDIAYNQTIMPNLLGHTNQEDAGLEVHQFYPLVKVQCSLELKFFLCSMYAPVCTVLEQAIPPCRSICERARQGCEALMNKFGFQWPERLRCENFPRHGAEQICVGQNHSEDGGSSAALLTSAAPPAAHGTPGAPRYATPDRPFHCPRALKVPGYLNYKFLGEKDCAAPCEPSRPDGHMFFNEDEIRFARVWILVWSVLCCASTFFTVTTYLVDMQRFRYPERPIIFLSGCYTMVSVAYIAGFVLEERVVCNERFQEDGYRTVVQGTKKEGCTILFMMLYFFSMASSIWWVILSLTWFLAAGMKWGHEAIEANSQYFHLAAWAVPAVKTITILAMGQIDGDLLSGVCFVGLNGIDPLRGFVLAPLFVYLFIGTSFLLAGFVSLFRIRTIMKHGGTKTEKLERLMVRIGVFSVLYTVPATIVIACYFYEQAFRQHWERSWISQHCKSLAIPCPLHFTPRMTPDFTVYMIKYLMTLIVGITSGFWIFSGKTLHSWRKFYTRLTNSRQGETTV.

An FZ domain is found at 1–120; sequence PDHGFCQPIS…HGAEQICVGQ (120 aa). The Extracellular portion of the chain corresponds to 1–205; that stretch reads PDHGFCQPIS…EDEIRFARVW (205 aa). 5 disulfide bridges follow: C6-C67, C14-C60, C51-C88, C77-C117, and C81-C105. An N-linked (GlcNAc...) asparagine glycan is attached at N20. An N-linked (GlcNAc...) asparagine glycan is attached at N121. A helical membrane pass occupies residues 206-226; that stretch reads ILVWSVLCCASTFFTVTTYLV. Residues 227–237 are Cytoplasmic-facing; that stretch reads DMQRFRYPERP. Residues 238–258 traverse the membrane as a helical segment; that stretch reads IIFLSGCYTMVSVAYIAGFVL. At 259–285 the chain is on the extracellular side; it reads EERVVCNERFQEDGYRTVVQGTKKEGC. Residues 286 to 306 form a helical membrane-spanning segment; it reads TILFMMLYFFSMASSIWWVIL. The Cytoplasmic segment spans residues 307–328; that stretch reads SLTWFLAAGMKWGHEAIEANSQ. Residues 329–349 traverse the membrane as a helical segment; it reads YFHLAAWAVPAVKTITILAMG. Residues 350-372 are Extracellular-facing; it reads QIDGDLLSGVCFVGLNGIDPLRG. Residues 373 to 393 form a helical membrane-spanning segment; the sequence is FVLAPLFVYLFIGTSFLLAGF. The Cytoplasmic segment spans residues 394–419; sequence VSLFRIRTIMKHGGTKTEKLERLMVR. Residues 420–440 traverse the membrane as a helical segment; sequence IGVFSVLYTVPATIVIACYFY. Residues 441 to 477 are Extracellular-facing; it reads EQAFRQHWERSWISQHCKSLAIPCPLHFTPRMTPDFT. The chain crosses the membrane as a helical span at residues 478–498; sequence VYMIKYLMTLIVGITSGFWIF. Residues 499 to 523 lie on the Cytoplasmic side of the membrane; the sequence is SGKTLHSWRKFYTRLTNSRQGETTV. A Lys-Thr-X-X-X-Trp motif, mediates interaction with the PDZ domain of Dvl family members motif is present at residues 501–506; sequence KTLHSW. Positions 521–523 match the PDZ-binding motif; that stretch reads TTV.

It belongs to the G-protein coupled receptor Fz/Smo family. Expressed in the developing head and limbs. Expressed broadly in cranial ectoderm. Also expressed in the developing somites (dermomyotome) and in other cranial placodes, including the olfactory, lens, and otic placodes (rostral rim of the vesicle).

The protein resides in the membrane. It is found in the cell membrane. Its function is as follows. Receptor for Wnt proteins. Most of frizzled receptors are coupled to the beta-catenin canonical signaling pathway, which leads to the activation of disheveled proteins, inhibition of GSK-3 kinase, nuclear accumulation of beta-catenin and activation of Wnt target genes. A second signaling pathway involving PKC and calcium fluxes has been seen for some family members, but it is not yet clear if it represents a distinct pathway or if it can be integrated in the canonical pathway, as PKC seems to be required for Wnt-mediated inactivation of GSK-3 kinase. Both pathways seem to involve interactions with G-proteins. May be involved in transduction and intercellular transmission of polarity information during tissue morphogenesis and/or in differentiated tissues. The sequence is that of Frizzled-2 (FZD2) from Gallus gallus (Chicken).